We begin with the raw amino-acid sequence, 315 residues long: Ribose-phosphate pyrophosphokinase (315 aa).

ATP contacts are provided by residues 37–39 and 96–97; these read DGE and RQ. 2 residues coordinate Mg(2+): histidine 131 and aspartate 170. The active site involves lysine 194. D-ribose 5-phosphate-binding positions include arginine 196, aspartate 220, and 224-228; that span reads DTGGT.

Belongs to the ribose-phosphate pyrophosphokinase family. Class I subfamily. Homohexamer. The cofactor is Mg(2+).

The protein resides in the cytoplasm. The catalysed reaction is D-ribose 5-phosphate + ATP = 5-phospho-alpha-D-ribose 1-diphosphate + AMP + H(+). It participates in metabolic intermediate biosynthesis; 5-phospho-alpha-D-ribose 1-diphosphate biosynthesis; 5-phospho-alpha-D-ribose 1-diphosphate from D-ribose 5-phosphate (route I): step 1/1. Involved in the biosynthesis of the central metabolite phospho-alpha-D-ribosyl-1-pyrophosphate (PRPP) via the transfer of pyrophosphoryl group from ATP to 1-hydroxyl of ribose-5-phosphate (Rib-5-P). The chain is Ribose-phosphate pyrophosphokinase from Shewanella oneidensis (strain ATCC 700550 / JCM 31522 / CIP 106686 / LMG 19005 / NCIMB 14063 / MR-1).